A 645-amino-acid polypeptide reads, in one-letter code: MDKNDYLKAVDSLNLWAKAYYTDDSPMASDDEYDKLYNAVVQFEKENPDLKLSYSPTNRIGGEILDEFKKISHIEKMWSMEDIFSDSELVAWISRGDKTDCEFFAEPKFDGASLNLLYENGNLISAATRGDGSVGEDVTNNAKVISSVPLQIDYKDKIEIRGEVVITKDDFELINIERSKNSEPPLANPRNAAAGSLRQLDNGIVKQRKLKFYPWGVGENSLKFNKHSQIMDFVRSLGFLHDNFCKVIRGIDELKIAYKELLSVRELKPILMDGMVIRVNDLSKANQLGYTVKFPKFMVAYKFPATEKTARLIDILLQVGRTGVVTPVGLLDGVLIDGAFIKNVTLHNFDEIDRLNLMKNDFVTVIRSGDVIPKITGVFKDRRDGSQSEIIRPKICPKCGNELLDEGVFIKCQNLTCKARVVSSIIYFASKKCMNIDGLGDAIVELLYQKNIIKDIADIYRLDELSFIGLEGFKTKKISNLLSAINNSKTPNLDKFIASLGIEHIGEVAAKKIANNYGDRWLELTLEELLALDGFGEAMALSYLEFMRVNLEKIKELLEFITPKMQNLELKTNIFSGKTVVITGTLSRSRDEFKAELESYGAKVSSSVSKKTDFVLYGNEAGSKLEKANELGVRAIDESEYESLK.

NAD(+) contacts are provided by residues 30-34, 79-80, and E106; these read DDEYD and SM. K108 serves as the catalytic N6-AMP-lysine intermediate. R129, E163, and K302 together coordinate NAD(+). Zn(2+) is bound by residues C396, C399, C412, and C417. Residues 570-645 form the BRCT domain; the sequence is LKTNIFSGKT…IDESEYESLK (76 aa).

The protein belongs to the NAD-dependent DNA ligase family. LigA subfamily. Mg(2+) is required as a cofactor. Mn(2+) serves as cofactor.

The catalysed reaction is NAD(+) + (deoxyribonucleotide)n-3'-hydroxyl + 5'-phospho-(deoxyribonucleotide)m = (deoxyribonucleotide)n+m + AMP + beta-nicotinamide D-nucleotide.. Its function is as follows. DNA ligase that catalyzes the formation of phosphodiester linkages between 5'-phosphoryl and 3'-hydroxyl groups in double-stranded DNA using NAD as a coenzyme and as the energy source for the reaction. It is essential for DNA replication and repair of damaged DNA. The sequence is that of DNA ligase from Campylobacter fetus subsp. fetus (strain 82-40).